Here is a 205-residue protein sequence, read N- to C-terminus: ITG-like peptide (205 aa).

The signal sequence occupies residues 1 to 15 (MRVYAAITLVLVANT). 2 consecutive propeptides follow at residues 16-188 (AYIG…TSGE) and 202-205 (MPFA).

As to expression, expressed throughout the nervous system (at protein level).

Its subcellular location is the secreted. This chain is ITG-like peptide, found in Camponotus floridanus (Florida carpenter ant).